The chain runs to 1708 residues: Clathrin heavy chain 2 (1708 aa).

Positions 1–492 are globular terminal domain; that stretch reads MAAANAPIAM…VDNDLALKIY (492 aa). 7 WD40-like repeat regions span residues 25–67, 68–113, 114–155, 156–205, 206–270, 271–314, and 315–343; these read FVTF…RPIT, ADSA…MPEQ, VVFW…ANLA, NNQI…QALE, AHAA…PDFQ, DDFP…ISPD, and PIFLTAESSASGGFYAINRRGQVLHATVN. Residues 462-478 form a binding site for the uncoating ATPase, involved in lattice disassembly region; sequence ENWLAEDKLECSEELGD. Positions 493-536 are flexible linker; the sequence is IKARATPKVVAAFAERREFDKILIYSKQVGYTPDYLFLLQTILR. Residues 537-648 form a distal segment region; that stretch reads TDPQGAVNFA…RALQHYTELP (112 aa). The heavy chain arm stretch occupies residues 537 to 1708; the sequence is TDPQGAVNFA…AYGMPPMGSY (1172 aa). CHCR repeat units lie at residues 551–697, 700–842, 847–986, 993–1138, 1142–1283, 1288–1434, and 1437–1580; these read QMEG…QIVV, AKEY…PEDF, ILSV…QLID, LPES…VSEA, FIRA…FRLA, LNII…DLIN, and LNVL…KECF. A proximal segment region spans residues 653–1708; that stretch reads VMVNTHAIEP…AYGMPPMGSY (1056 aa). The segment at 1227 to 1536 is involved in binding clathrin light chain; sequence AAKIIYAFIS…YIYKKAGRWK (310 aa). A trimerization region spans residues 1564-1708; that stretch reads SEDLLVYFIE…AYGMPPMGSY (145 aa).

Belongs to the clathrin heavy chain family. As to quaternary structure, clathrin triskelions, composed of 3 heavy chains and 3 light chains, are the basic subunits of the clathrin coat.

The protein resides in the cytoplasmic vesicle membrane. The protein localises to the membrane. Its subcellular location is the coated pit. Its function is as follows. Clathrin is the major protein of the polyhedral coat of coated pits and vesicles. This chain is Clathrin heavy chain 2, found in Oryza sativa subsp. japonica (Rice).